The chain runs to 1149 residues: Transforming acidic coiled-coil-containing protein 2 (1149 aa).

Disordered stretches follow at residues 1 to 73 (MGNE…GSNQ), 91 to 227 (SASP…ASSG), and 247 to 430 (PCSA…VPLT). A compositionally biased stretch (polar residues) spans 13 to 35 (TSSVQSPRSLQPPGKSQSLQKQQ). Positions 91 to 106 (SASPSAARASPAPLAP) are enriched in low complexity. S100 carries the phosphoserine modification. Pro residues predominate over residues 155–180 (KAPPAPPPPPPEVTPEPEVIDPPAPE). S265 carries the post-translational modification Phosphoserine. Composition is skewed to polar residues over residues 267 to 284 (ESVPPSKSTLSRSLSLQA) and 300 to 317 (TLTTDACGTGSNSASSTL). The span at 318–334 (KRTKKTRPPSLKKKQAT) shows a compositional bias: basic residues. S354 carries the post-translational modification Phosphoserine. Residues 358 to 368 (SEEHLAPETKT) show a composition bias toward basic and acidic residues. S419 is subject to Phosphoserine. T439 carries the post-translational modification Phosphothreonine. The tract at residues 463–617 (SEDKGSWESQ…PAKKKKTPLK (155 aa)) is disordered. Residues 481 to 498 (KIGKKPVAKMPLRRPKMK) show a composition bias toward basic residues. One can recognise an SPAZ domain in the interval 508–596 (PASPPRSPTE…SPASFEIPAS (89 aa)). Phosphoserine is present on residues S510 and S514. T516 is subject to Phosphothreonine. Residues 541–561 (NPFSSTSKMQESPKLSQQSYN) are compositionally biased toward polar residues. A phosphoserine mark is found at S552, S582, S585, S587, and S596. A compositionally biased stretch (low complexity) spans 575–590 (KASSKTPSSPSKSPAS). T632, T653, and T657 each carry phosphothreonine. 2 disordered regions span residues 636 to 665 (KKSPKRSPLSDPPSQDPTPAATPEAPSAIS) and 696 to 719 (DFPQPSDLSNFVNETKFNSPSEEL). A compositionally biased stretch (low complexity) spans 652-665 (PTPAATPEAPSAIS). The span at 701 to 716 (SDLSNFVNETKFNSPS) shows a compositional bias: polar residues. Phosphoserine occurs at positions 714 and 736. T755 carries the phosphothreonine modification. The disordered stretch occupies residues 756 to 780 (PQESPVKSPPVRMSDSPTPCSGSSF). Phosphoserine occurs at positions 759 and 771. The segment covering 770-780 (DSPTPCSGSSF) has biased composition (polar residues). Coiled coils occupy residues 877-905 (AQKLQEELEFAVMRIEALKLARQIALASR) and 948-1148 (DLDS…KMGK).

The protein belongs to the TACC family. As to quaternary structure, interacts with microtubules. Interacts with YEATS4, GCN5L2 and PCAF. Interacts with CCDC100/CEP120. Post-translationally, phosphorylated; which is required for localization in centrosome. Expressed in brain, kidney, lung, thymus and ovary. Not detectable in normal tissues at protein level.

It is found in the cytoplasm. It localises to the nucleus. The protein localises to the cytoskeleton. The protein resides in the microtubule organizing center. Its subcellular location is the centrosome. Functionally, plays a role in the microtubule-dependent coupling of the nucleus and the centrosome. Involved in the processes that regulate centrosome-mediated interkinetic nuclear migration (INM) of neural progenitors. May play a role in organizing centrosomal microtubules. The polypeptide is Transforming acidic coiled-coil-containing protein 2 (Tacc2) (Mus musculus (Mouse)).